The following is a 662-amino-acid chain: Probable dolichyl-phosphate-mannose--protein mannosyltransferase 7 (662 aa).

Residues 1-26 (MKDLRLQGPYRKYIPYNIFQQCGIGH) are Lumenal-facing. The chain crosses the membrane as a helical span at residues 27 to 47 (LKTLDYIFAFLIVITNFTLIW). The Cytoplasmic segment spans residues 48–159 (KSHSSSFWNR…GTIISFDSLE (112 aa)). The chain crosses the membrane as a helical span at residues 160 to 180 (WCLFSVVIYSFISISIAKLGT). At 181-195 (TNWFANVITLSISLG) the chain is on the lumenal side. A helical membrane pass occupies residues 196-216 (LAISSKFIGIVTWAFVILSFV). Topologically, residues 217-235 (RQFDRLISDVKVTTIQIIK) are cytoplasmic. Residues 236–256 (FVILCLLFVLIIPGSIFIISY) form a helical membrane-spanning segment. The Lumenal segment spans residues 257–482 (SNLLSNFKTD…MEYPVIPRTT (226 aa)). The MIR 1 domain occupies 289-344 (PSRLYYGSTITLRHLDSMVGYLASHDISYPSDVDEQLVALSFEEFAADNEWLIEHP). Asn347 is a glycosylation site (N-linked (GlcNAc...) asparagine). 2 MIR domains span residues 359–418 (LIPV…VLLI) and 432–488 (DKYI…IDSV). Residues 483–503 (FLIDSVQLPVDFQVPMIEYYI) traverse the membrane as a helical segment. Topologically, residues 504–565 (GKISSSAEFN…KWPITLDTDS (62 aa)) are cytoplasmic. Residues 566–586 (PVWFNFAWYGSLLSMIIFMCV) traverse the membrane as a helical segment. The Lumenal segment spans residues 587–617 (QCKRMISWNPWTTAEPSFSIKWEVYNEFGWE). Residues 618-638 (CIVGWFLHFYIFTMSPHFNLG) traverse the membrane as a helical segment. Over 639–662 (KKLYFQSFFFSVLCLLESLDCLAK) the chain is Cytoplasmic.

It belongs to the glycosyltransferase 39 family.

It is found in the endoplasmic reticulum membrane. It carries out the reaction a di-trans,poly-cis-dolichyl beta-D-mannosyl phosphate + L-seryl-[protein] = 3-O-(alpha-D-mannosyl)-L-seryl-[protein] + a di-trans,poly-cis-dolichyl phosphate + H(+). It catalyses the reaction a di-trans,poly-cis-dolichyl beta-D-mannosyl phosphate + L-threonyl-[protein] = 3-O-(alpha-D-mannosyl)-L-threonyl-[protein] + a di-trans,poly-cis-dolichyl phosphate + H(+). The protein operates within protein modification; protein glycosylation. In terms of biological role, probable protein O-mannosyltransferase involved in O-glycosylation which is essential for cell wall rigidity. Transfers mannose from Dol-P-mannose to Ser or Thr residues on proteins. The sequence is that of Probable dolichyl-phosphate-mannose--protein mannosyltransferase 7 from Saccharomyces cerevisiae (strain ATCC 204508 / S288c) (Baker's yeast).